Here is a 125-residue protein sequence, read N- to C-terminus: Small ribosomal subunit protein uS12 (125 aa).

Asp-89 is subject to 3-methylthioaspartic acid. The disordered stretch occupies residues 100–125 (GSLDTQGVQNRKQARSKYGAKRPKKA). Residues 111 to 125 (KQARSKYGAKRPKKA) show a composition bias toward basic residues.

This sequence belongs to the universal ribosomal protein uS12 family. As to quaternary structure, part of the 30S ribosomal subunit. Contacts proteins S8 and S17. May interact with IF1 in the 30S initiation complex.

In terms of biological role, with S4 and S5 plays an important role in translational accuracy. Functionally, interacts with and stabilizes bases of the 16S rRNA that are involved in tRNA selection in the A site and with the mRNA backbone. Located at the interface of the 30S and 50S subunits, it traverses the body of the 30S subunit contacting proteins on the other side and probably holding the rRNA structure together. The combined cluster of proteins S8, S12 and S17 appears to hold together the shoulder and platform of the 30S subunit. This is Small ribosomal subunit protein uS12 from Thioalkalivibrio sulfidiphilus (strain HL-EbGR7).